A 612-amino-acid polypeptide reads, in one-letter code: MFS siderochrome iron transporter B (612 aa).

Residues 1–86 (MLHVLSVGPS…GAQAGVKKIE (86 aa)) lie on the Cytoplasmic side of the membrane. The segment at 55–78 (DKEAAHAPANAETNNEEANPSDGA) is disordered. The span at 60–72 (HAPANAETNNEEA) shows a compositional bias: low complexity. A helical transmembrane segment spans residues 87-104 (AVTLSWTRGTAIWFLTLV). Topologically, residues 105 to 127 (NDFRLSMYTSLNAYATSSFLGHS) are extracellular. A helical membrane pass occupies residues 128 to 148 (LLTVINIVSYVMGGSVYIPMA). At 149–156 (KALDLWGR) the chain is on the cytoplasmic side. Residues 157–177 (AEGFLLMTFFCILGLILLASS) traverse the membrane as a helical segment. Residues 178–187 (QNLPTYCAGQ) are Extracellular-facing. A helical transmembrane segment spans residues 188–208 (VFYKVGFGGLSYTWNVLAADV). The Cytoplasmic segment spans residues 209–215 (TNLRNRG). The chain crosses the membrane as a helical span at residues 216-236 (LAFAFTSSPALISAFAGSKAA). Topologically, residues 237–246 (SDLLAHSTWR) are extracellular. The helical transmembrane segment at 247 to 267 (WGFGMWAIILPVVALPIYGLL) threads the bilayer. At 268–302 (AYHLRQAEKKGVLVKETRDWSITPKTVWWAIMEFD) the chain is on the cytoplasmic side. The helical transmembrane segment at 303 to 323 (LPGVLLFAGGFVIFLLPFTLA) threads the bilayer. The Extracellular portion of the chain corresponds to 324 to 334 (ATAPHGYQTDY). Residues 335-355 (IIAMITLGLALIIAFGFYEML) traverse the membrane as a helical segment. Residues 356-370 (VAPVPFLNYKFLIDR) are Cytoplasmic-facing. A helical transmembrane segment spans residues 371 to 393 (TVLGACLLDMTYQVSYYCYASYL). Topologically, residues 394-409 (PSFLQVVYELDVATAG) are extracellular. A helical transmembrane segment spans residues 410–430 (YVTNTFSVVSFVFLFFAGWLI). Residues 431–435 (RWTGR) are Cytoplasmic-facing. A helical membrane pass occupies residues 436–456 (FKWILWVCVPLYIFGLGLMIH). Residues 457-463 (FRQPGGY) lie on the Extracellular side of the membrane. The helical transmembrane segment at 464-484 (IGYIVMCEIFFSVAGSVFILC) threads the bilayer. Residues 485-498 (VQLAVLASVDHQHV) are Cytoplasmic-facing. Residues 499–519 (AAVLALLFVMGSIGGSIGSAI) traverse the membrane as a helical segment. Over 520–575 (CGAIWTSTFLSRLERNLPASAMPDLSLIYSSLPTQLSYPVGSATRTAIVEAYGYAQ) the chain is Extracellular. A helical membrane pass occupies residues 576–596 (ARMLIAGTAFMVLGFIWVGMM). Residues 597 to 612 (RNLNVKNMTQTKGNVV) lie on the Cytoplasmic side of the membrane.

This sequence belongs to the major facilitator superfamily.

The protein localises to the cell tip. The protein resides in the cytoplasmic vesicle membrane. Its subcellular location is the cell membrane. Major facilitator transporter involved in triacetylfusarinine C (TAFC) uptake. Can also transport ferricrocin and coprogen, but not ferrichrysin. MirB plays a crucial role for virulence in a murine model of pulmonary aspergillosis, indicating that TAFC-mediated iron uptake plays a dominant role during infection. This is MFS siderochrome iron transporter B from Aspergillus fumigatus (strain ATCC MYA-4609 / CBS 101355 / FGSC A1100 / Af293) (Neosartorya fumigata).